The sequence spans 505 residues: Histidine ammonia-lyase (505 aa).

Residues 141–143 constitute a cross-link (5-imidazolinone (Ala-Gly)); that stretch reads ASG. A 2,3-didehydroalanine (Ser) modification is found at serine 142.

This sequence belongs to the PAL/histidase family. Post-translationally, contains an active site 4-methylidene-imidazol-5-one (MIO), which is formed autocatalytically by cyclization and dehydration of residues Ala-Ser-Gly.

It localises to the cytoplasm. It carries out the reaction L-histidine = trans-urocanate + NH4(+). It participates in amino-acid degradation; L-histidine degradation into L-glutamate; N-formimidoyl-L-glutamate from L-histidine: step 1/3. The polypeptide is Histidine ammonia-lyase (Bacillus thuringiensis subsp. konkukian (strain 97-27)).